The chain runs to 364 residues: Medium-wave-sensitive opsin 1 (364 aa).

Positions methionine 1–threonine 23 are disordered. Residues methionine 1 to valine 52 are Extracellular-facing. The segment at glutamate 17–proline 43 is required for 11-cis-retinal regeneration. Asparagine 34 is a glycosylation site (N-linked (GlcNAc...) asparagine). Residues tyrosine 53–alanine 77 form a helical membrane-spanning segment. Over threonine 78–asparagine 89 the chain is Cytoplasmic. The chain crosses the membrane as a helical span at residues tryptophan 90–phenylalanine 115. The Extracellular segment spans residues tyrosine 116–glutamate 129. An intrachain disulfide couples cysteine 126 to cysteine 203. Residues glycine 130–tryptophan 149 form a helical membrane-spanning segment. The Cytoplasmic segment spans residues glutamate 150 to leucine 168. Residues alanine 169–serine 192 form a helical membrane-spanning segment. Residues arginine 193–serine 218 are Extracellular-facing. Residues tyrosine 219 to isoleucine 246 form a helical membrane-spanning segment. Over arginine 247–arginine 268 the chain is Cytoplasmic. A helical membrane pass occupies residues methionine 269–threonine 292. Residues alanine 293–histidine 300 are Extracellular-facing. A helical membrane pass occupies residues proline 301–methionine 325. An N6-(retinylidene)lysine modification is found at lysine 312. Residues asparagine 326–alanine 364 are Cytoplasmic-facing.

The protein belongs to the G-protein coupled receptor 1 family. Opsin subfamily. In terms of assembly, monomer. Homodimer. Homotetramer. Post-translationally, O-glycosylated. In terms of processing, phosphorylated on some or all of the serine and threonine residues present in the C-terminal region. In terms of tissue distribution, expressed in cone photoreceptor cells.

The protein resides in the membrane. In terms of biological role, visual pigments are the light-absorbing molecules that mediate vision. They consist of an apoprotein, opsin, covalently linked to cis-retinal. May increase spectral sensitivity in dim light. The polypeptide is Medium-wave-sensitive opsin 1 (OPN1MW) (Oryctolagus cuniculus (Rabbit)).